We begin with the raw amino-acid sequence, 251 residues long: Ubiquinone/menaquinone biosynthesis C-methyltransferase UbiE (251 aa).

Residues Thr-74, Asp-95, 123–124 (NA), and Ser-140 each bind S-adenosyl-L-methionine.

The protein belongs to the class I-like SAM-binding methyltransferase superfamily. MenG/UbiE family.

It catalyses the reaction a 2-demethylmenaquinol + S-adenosyl-L-methionine = a menaquinol + S-adenosyl-L-homocysteine + H(+). It carries out the reaction a 2-methoxy-6-(all-trans-polyprenyl)benzene-1,4-diol + S-adenosyl-L-methionine = a 5-methoxy-2-methyl-3-(all-trans-polyprenyl)benzene-1,4-diol + S-adenosyl-L-homocysteine + H(+). It participates in quinol/quinone metabolism; menaquinone biosynthesis; menaquinol from 1,4-dihydroxy-2-naphthoate: step 2/2. Its pathway is cofactor biosynthesis; ubiquinone biosynthesis. Functionally, methyltransferase required for the conversion of demethylmenaquinol (DMKH2) to menaquinol (MKH2) and the conversion of 2-polyprenyl-6-methoxy-1,4-benzoquinol (DDMQH2) to 2-polyprenyl-3-methyl-6-methoxy-1,4-benzoquinol (DMQH2). The polypeptide is Ubiquinone/menaquinone biosynthesis C-methyltransferase UbiE (Proteus mirabilis (strain HI4320)).